The following is a 199-amino-acid chain: dITP/XTP pyrophosphatase (199 aa).

Substrate is bound at residue 12–17; sequence SGNAGK. Residue aspartate 73 is the Proton acceptor of the active site. Aspartate 73 serves as a coordination point for Mg(2+). Residues serine 74, 157 to 160, lysine 180, and 185 to 186 each bind substrate; these read FGYD and HR.

This sequence belongs to the HAM1 NTPase family. As to quaternary structure, homodimer. It depends on Mg(2+) as a cofactor.

It catalyses the reaction XTP + H2O = XMP + diphosphate + H(+). The enzyme catalyses dITP + H2O = dIMP + diphosphate + H(+). It carries out the reaction ITP + H2O = IMP + diphosphate + H(+). In terms of biological role, pyrophosphatase that catalyzes the hydrolysis of nucleoside triphosphates to their monophosphate derivatives, with a high preference for the non-canonical purine nucleotides XTP (xanthosine triphosphate), dITP (deoxyinosine triphosphate) and ITP. Seems to function as a house-cleaning enzyme that removes non-canonical purine nucleotides from the nucleotide pool, thus preventing their incorporation into DNA/RNA and avoiding chromosomal lesions. The polypeptide is dITP/XTP pyrophosphatase (Neisseria meningitidis serogroup B (strain ATCC BAA-335 / MC58)).